The primary structure comprises 810 residues: Venom phosphodiesterase 2 (810 aa).

A signal peptide spans 1 to 23 (MIQQKVLFISLVAVTLGLGLGLG). Residues 33–77 (QSWSCSKLRCGEKRIANVLCSCSDDCLEKKDCCTDYKSICKGETS) form the SMB domain. 9 cysteine pairs are disulfide-bonded: C37-C42, C37-C54, C42-C72, C52-C54, C52-C65, C58-C64, C65-C72, C83-C129, and C91-C303. Residues D106 and T144 each contribute to the a divalent metal cation site. Catalysis depends on T144, which acts as the AMP-threonine intermediate. N-linked (GlcNAc...) asparagine glycans are attached at residues N175, N218, and N229. Residue K230 participates in AMP binding. D264, H268, D311, and H312 together coordinate a divalent metal cation. AMP is bound at residue H268. 6 cysteine pairs are disulfide-bonded: C319–C416, C367–C752, C500–C558, C513–C613, C515–C598, and C721–C731. N364 is a glycosylation site (N-linked (GlcNAc...) asparagine). H421 provides a ligand contact to a divalent metal cation. N-linked (GlcNAc...) asparagine glycosylation is found at N471, N553, N633, and N704.

It belongs to the nucleotide pyrophosphatase/phosphodiesterase family. Monomer cleaved in two subunits; disulfide-linked. Is synthesized as a single-chain protein and is subsequently cleaved to form a two-subunit protein held together with disulfide bonds. A divalent metal cation is required as a cofactor. In terms of tissue distribution, expressed by venom gland.

It is found in the secreted. The catalysed reaction is ADP + H2O = AMP + phosphate + H(+). Its function is as follows. Hydrolyzes ADP with high activity. Shows weak or no activity on 5'-AMP, 5'-GMP, 3'-AMP, ATP, cAMP, and cGMP. Is devoid of monophosphatase and proteinase activities. Dose-dependently inhibits platelet aggregation induced by ADP (IC(50)=0.99 uM) and collagen (IC(50)=1.4 uM). The sequence is that of Venom phosphodiesterase 2 from Crotalus adamanteus (Eastern diamondback rattlesnake).